A 136-amino-acid polypeptide reads, in one-letter code: 5-hydroxyisourate hydrolase (136 aa).

Positions 1–22 (MKRHILATVIASLVAAPAMALA) are cleaved as a signal peptide. The substrate site is built by H31, R69, and Y133.

This sequence belongs to the transthyretin family. 5-hydroxyisourate hydrolase subfamily. Homotetramer.

It localises to the periplasm. It catalyses the reaction 5-hydroxyisourate + H2O = 5-hydroxy-2-oxo-4-ureido-2,5-dihydro-1H-imidazole-5-carboxylate + H(+). Its function is as follows. Catalyzes the hydrolysis of 5-hydroxyisourate (HIU) to 2-oxo-4-hydroxy-4-carboxy-5-ureidoimidazoline (OHCU). This chain is 5-hydroxyisourate hydrolase (hiuH), found in Salmonella dublin.